The chain runs to 418 residues: MEEVSSCSLRSTLFQQEEQNRITYRIPALLYIPPTHTFLAFAEMRTSSRDEDAVYLVFRRGVMKGCSVEWGPQQPLMEATLPGHRTMSPCPVWEKNTGRVYLFFICVQGHVSERWQLLWGRNAARLCFLYSEDSGCSWGEVKDLTEEVVGSEMKHWATFAVGPGHGIQLQSGRLLIPAYAYLISCWFLCFPCSVKPHSLMFYSDDLGVTWHCGKFIKPQVTGECQVAEVPGKAGNLVLYCSARTPNKFRAEAFSTDSGDCFQKPTLNQQLCEPRGGCQGSVVSTRPLKMPYTCQDSSGKDVPSTQKCPLMDRSLEVEEGAGAPSGTWLLYSHPTNKKKRMNLGIYYNQNPLEVNYWSRPWILNRGPSGYSDLAVVEGQGLFACLFECGERHEDEKIDFCLFSDQEVLSCDDCTSPSSN.

The FRIP motif signature appears at 24–27 (YRIP). Substrate contacts are provided by Arg-25 and Arg-45. The Proton acceptor role is filled by Asp-50. A BNR 1 repeat occupies 129–140 (LYSEDSGCSWGE). The substrate site is built by Tyr-179 and Tyr-181. One copy of the BNR 2 repeat lies at 201–212 (FYSDDLGVTWHC). 2 residues coordinate substrate: Glu-223 and Arg-243. One copy of the BNR 3 repeat lies at 252–263 (AFSTDSGDCFQK). Position 339 (Arg-339) interacts with substrate. The active-site Nucleophile is Tyr-369. Residue Glu-386 is part of the active site.

It belongs to the glycosyl hydrolase 33 family. In terms of assembly, interacts with CAV1; this interaction enhances NEU3 sialidase activity within caveola. Interacts with EGFR; this interaction mediates desialylation of EGFR enhancing downstream signaling. Palmitoylated; may regulate intracellular trafficking and anchorage to plasma membrane and endomembranes. In terms of tissue distribution, expressed in brain, cardiac muscle and weakly in liver.

It is found in the cell membrane. The protein resides in the membrane. Its subcellular location is the caveola. It localises to the early endosome membrane. The protein localises to the recycling endosome membrane. It is found in the lysosome membrane. The enzyme catalyses Hydrolysis of alpha-(2-&gt;3)-, alpha-(2-&gt;6)-, alpha-(2-&gt;8)- glycosidic linkages of terminal sialic acid residues in oligosaccharides, glycoproteins, glycolipids, colominic acid and synthetic substrates.. It catalyses the reaction a ganglioside GD1a + H2O = a ganglioside GM1 + N-acetylneuraminate. It carries out the reaction a ganglioside GD1a (d18:1(4E)) + H2O = a ganglioside GM1 (d18:1(4E)) + N-acetylneuraminate. The catalysed reaction is a ganglioside GD1b + H2O = a ganglioside GM1 + N-acetylneuraminate. The enzyme catalyses a ganglioside GD1b (d18:1(4E)) + H2O = a ganglioside GM1 (d18:1(4E)) + N-acetylneuraminate. It catalyses the reaction a ganglioside GD3 + H2O = a ganglioside GM3 + N-acetylneuraminate. It carries out the reaction a ganglioside GD3 (d18:1(4E)) + H2O = a ganglioside GM3 (d18:1(4E)) + N-acetylneuraminate. The catalysed reaction is a ganglioside GM3 + H2O = a beta-D-galactosyl-(1-&gt;4)-beta-D-glucosyl-(1&lt;-&gt;1)-ceramide + N-acetylneuraminate. The enzyme catalyses a ganglioside GM1 + H2O = a ganglioside GA1 + N-acetylneuraminate. It catalyses the reaction a ganglioside GM1 (d18:1(4E)) + H2O = a ganglioside GA1 (d18:1(4E)) + N-acetylneuraminate. It carries out the reaction a ganglioside GM2 (d18:1(4E)) + H2O = a ganglioside GA2 (d18:1(4E)) + N-acetylneuraminate. The catalysed reaction is a ganglioside GM3 (d18:1(4E)) + H2O = a beta-D-Gal-(1-&gt;4)-beta-D-Glc-(1&lt;-&gt;1)-Cer(d18:1(4E)) + N-acetylneuraminate. The enzyme catalyses a ganglioside GT1b + H2O = a ganglioside GD1b + N-acetylneuraminate. Functionally, exo-alpha-sialidase that catalyzes the hydrolytic cleavage of the terminal sialic acid (N-acetylneuraminic acid, Neu5Ac) of a glycan moiety in the catabolism of glycolipids, glycoproteins and oligosacharides. Displays high catalytic efficiency for gangliosides including alpha-(2-&gt;3)-sialylated GD1a and GM3 and alpha-(2-&gt;8)-sialylated GD3. Plays a role in the regulation of transmembrane signaling through the modulation of ganglioside content of the lipid bilayer and by direct interaction with signaling receptors, such as EGFR. Desialylates EGFR and activates downstream signaling in proliferating cells. Contributes to clathrin-mediated endocytosis by regulating sorting of endocytosed receptors to early and recycling endosomes. The chain is Sialidase-3 (Neu3) from Rattus norvegicus (Rat).